Here is a 165-residue protein sequence, read N- to C-terminus: Keratin-associated protein 5-7 (165 aa).

A run of 7 repeats spans residues Cys35–Pro38, Cys41–Pro44, Cys47–Pro50, Cys116–Pro119, Cys126–Pro129, Cys145–Pro148, and Cys155–Pro158. The tract at residues Cys35–Pro158 is 7 X 4 AA repeats of C-C-X-P.

The protein belongs to the KRTAP type 5 family. As to quaternary structure, interacts with hair keratins. As to expression, expressed in hair root but not in skin.

Functionally, in the hair cortex, hair keratin intermediate filaments are embedded in an interfilamentous matrix, consisting of hair keratin-associated protein (KRTAP), which are essential for the formation of a rigid and resistant hair shaft through their extensive disulfide bond cross-linking with abundant cysteine residues of hair keratins. The matrix proteins include the high-sulfur and high-glycine-tyrosine keratins. In Homo sapiens (Human), this protein is Keratin-associated protein 5-7 (KRTAP5-7).